The chain runs to 378 residues: Alcohol dehydrogenase 1 (378 aa).

Cys-48 contacts Zn(2+). 49–53 lines the NAD(+) pocket; the sequence is HTDVL. Residues His-69, Cys-99, Cys-102, Cys-105, Cys-113, and Cys-177 each contribute to the Zn(2+) site. Residues 202–207, Asp-226, Lys-231, 274–276, 297–299, and 321–323 contribute to the NAD(+) site; these read GIGTVG, TGV, IGA, and TAF.

This sequence belongs to the zinc-containing alcohol dehydrogenase family. Class-IV subfamily. As to quaternary structure, homodimer. Zn(2+) serves as cofactor. In terms of tissue distribution, present in non-glandular trichome cells.

It localises to the nucleus. Its subcellular location is the cytoplasm. It is found in the cytosol. The enzyme catalyses (+)-artemisinic alcohol + NAD(+) = (+)-artemisinic aldehyde + NADH + H(+). It functions in the pathway sesquiterpene biosynthesis. Involved in the biosynthesis of the antimalarial endoperoxide artemisinin. Catalyzes the conversion of artemisinic alcohol into artemisinic aldehyde. The sequence is that of Alcohol dehydrogenase 1 from Artemisia annua (Sweet wormwood).